The chain runs to 574 residues: Galactose transporter (574 aa).

The tract at residues 1–57 is disordered; it reads MAVEENNMPVVSQQPQAGEDVISSLSKDSHLSAQSQKYSNDELKAGESGSEGSQSVP. The Cytoplasmic portion of the chain corresponds to 1 to 70; sequence MAVEENNMPV…PKKPMSEYVT (70 aa). Residues 23 to 38 show a composition bias toward polar residues; sequence SSLSKDSHLSAQSQKY. A phosphoserine mark is found at Ser-32, Ser-35, Ser-39, Ser-48, Ser-50, Ser-53, and Ser-55. Residues 71 to 91 form a helical membrane-spanning segment; sequence VSLLCLCVAFGGFMFGWDTGT. At 92–121 the chain is on the extracellular side; it reads ISGFVVQTDFLRRFGMKHKDGTHYLSNVRT. Residues 122–142 form a helical membrane-spanning segment; sequence GLIVAIFNIGCAFGGIILSKG. Over 143–149 the chain is Cytoplasmic; the sequence is GDMYGRK. The helical transmembrane segment at 150-170 threads the bilayer; that stretch reads KGLSIVVSVYIVGIIIQIASI. At 171-175 the chain is on the extracellular side; that stretch reads NKWYQ. Residues 176 to 196 traverse the membrane as a helical segment; the sequence is YFIGRIISGLGVGGIAVLCPM. Over 197–207 the chain is Cytoplasmic; sequence LISEIAPKHLR. A helical membrane pass occupies residues 208 to 228; it reads GTLVSCYQLMITAGIFLGYCT. Residues 229–242 lie on the Extracellular side of the membrane; it reads NYGTKSYSNSVQWR. A helical transmembrane segment spans residues 243–263; that stretch reads VPLGLCFAWSLFMIGALTLVP. Residues 264 to 342 are Cytoplasmic-facing; it reads ESPRYLCEVN…MGVFVQMFQQ (79 aa). Residues 343 to 362 traverse the membrane as a helical segment; it reads LTGNNYFFYYGTVIFKSVGL. Residues 363-366 lie on the Extracellular side of the membrane; it reads DDSF. The helical transmembrane segment at 367-387 threads the bilayer; the sequence is ETSIVIGVVNFASTFFSLWTV. Over 388–394 the chain is Cytoplasmic; that stretch reads ENLGHRK. Residues 395–415 form a helical membrane-spanning segment; it reads CLLLGAATMMACMVIYASVGV. The Extracellular portion of the chain corresponds to 416 to 435; the sequence is TRLYPHGKSQPSSKGAGNCM. The chain crosses the membrane as a helical span at residues 436–456; that stretch reads IVFTCFYIFCYATTWAPVAWV. Residues 457 to 472 are Cytoplasmic-facing; that stretch reads ITAESFPLRVKSKCMA. Residues 473 to 493 traverse the membrane as a helical segment; sequence LASASNWVWGFLIAFFTPFIT. The Extracellular portion of the chain corresponds to 494–499; the sequence is SAINFY. The helical transmembrane segment at 500–520 threads the bilayer; it reads YGYVFMGCLVAMFFYVFFFVP. Residues 521-574 are Cytoplasmic-facing; the sequence is ETKGLSLEEIQELWEEGVLPWKSEGWIPSSRRGNNYDLEDLQHDDKPWYKAMLE.

This sequence belongs to the major facilitator superfamily. Sugar transporter (TC 2.A.1.1) family.

The protein localises to the membrane. GAL2 is a facilitated diffusion transporter required for both the high-affinity galactokinase-dependent and low-affinity galactokinase-independent galactose transport processes. The protein is Galactose transporter (GAL2) of Saccharomyces cerevisiae (strain ATCC 204508 / S288c) (Baker's yeast).